Consider the following 380-residue polypeptide: MSSSEVASHYNKVLQVGIEGRKESRIFFMRNMNNWVKSQLINDAKQRVNDNGVNNPRVLDLACGKGGDLKKWDIAGAKDVVMADVADVSIQQAEERYKQMFGYKKNNIFTVQFIVADCTKENLEDRIENKDPFDLVSCQFALHYSFVDEASARIFLKNAVGMLKPGGVFIGTLPDADRIVWSMRNGENGQFANEVCKITYENVEELAEGKVPLFGAKFHFSLDEQVNCPEFLAYFPLVKHLLEELDMELLFVHNFAEAINKWLEPGRRLLESMTGLETYPNEKLSGKSDDEYLEAKAKLDAFPEDERIKTMGTLSKSEWEAICMYLVFGFRKKKSEAEKTEEEPATTKPVAESESEQKEVTESEEKEDQEDCEHQEAQTN.

The 310-residue stretch at 24–333 folds into the mRNA cap 0 methyltransferase domain; sequence SRIFFMRNMN…MYLVFGFRKK (310 aa). 33–34 is an mRNA binding site; sequence NN. S-adenosyl-L-methionine is bound by residues K37, A62, D84, D117, Q139, and Y144. A disordered region spans residues 336–380; the sequence is EAEKTEEEPATTKPVAESESEQKEVTESEEKEDQEDCEHQEAQTN.

This sequence belongs to the class I-like SAM-binding methyltransferase superfamily. mRNA cap 0 methyltransferase family.

Its subcellular location is the nucleus. The enzyme catalyses a 5'-end (5'-triphosphoguanosine)-ribonucleoside in mRNA + S-adenosyl-L-methionine = a 5'-end (N(7)-methyl 5'-triphosphoguanosine)-ribonucleoside in mRNA + S-adenosyl-L-homocysteine. In terms of biological role, mRNA-capping methyltransferase that methylates the N7 position of the added guanosine to the 5'-cap structure of mRNAs. Binds RNA containing 5'-terminal GpppC. This chain is mRNA cap guanine-N(7) methyltransferase (tag-72), found in Caenorhabditis elegans.